We begin with the raw amino-acid sequence, 273 residues long: Ribosomal RNA small subunit methyltransferase A (273 aa).

Residues Asn18, Leu20, Gly45, Glu66, Asp91, and Asn113 each coordinate S-adenosyl-L-methionine.

Belongs to the class I-like SAM-binding methyltransferase superfamily. rRNA adenine N(6)-methyltransferase family. RsmA subfamily.

It localises to the cytoplasm. It carries out the reaction adenosine(1518)/adenosine(1519) in 16S rRNA + 4 S-adenosyl-L-methionine = N(6)-dimethyladenosine(1518)/N(6)-dimethyladenosine(1519) in 16S rRNA + 4 S-adenosyl-L-homocysteine + 4 H(+). In terms of biological role, specifically dimethylates two adjacent adenosines (A1518 and A1519) in the loop of a conserved hairpin near the 3'-end of 16S rRNA in the 30S particle. May play a critical role in biogenesis of 30S subunits. This is Ribosomal RNA small subunit methyltransferase A from Escherichia coli O81 (strain ED1a).